The primary structure comprises 220 residues: Charged multivesicular body protein 2a (220 aa).

Residue M1 is modified to N-acetylmethionine. 2 coiled-coil regions span residues 12-52 and 195-220; these read EELL…KMAK and RAAE…LRRD. The MIT-interacting motif motif lies at 208-218; sequence ADLEERLKNLR.

The protein belongs to the SNF7 family. As to quaternary structure, probable core component of the endosomal sorting required for transport complex III (ESCRT-III). ESCRT-III components are thought to multimerize to form a flat lattice on the perimeter membrane of the endosome.

The protein resides in the late endosome membrane. The protein localises to the cytoplasm. Functionally, probable core component of the endosomal sorting required for transport complex III (ESCRT-III) which is involved in multivesicular bodies (MVBs) formation and sorting of endosomal cargo proteins into MVBs. MVBs contain intraluminal vesicles (ILVs) that are generated by invagination and scission from the limiting membrane of the endosome and mostly are delivered to lysosomes enabling degradation of membrane proteins, such as stimulated growth factor receptors, lysosomal enzymes and lipids. The sequence is that of Charged multivesicular body protein 2a (CHMP2A) from Gallus gallus (Chicken).